A 205-amino-acid polypeptide reads, in one-letter code: Microtubule-associated protein Jupiter (205 aa).

Serine 30 bears the Phosphoserine mark. Phosphothreonine occurs at positions 41, 98, and 102. The segment covering leucine 124–lysine 135 has biased composition (polar residues). The disordered stretch occupies residues leucine 124 to tryptophan 205. A compositionally biased stretch (low complexity) spans serine 136–serine 149. Phosphoserine occurs at positions 138 and 149. Polar residues predominate over residues proline 181–asparagine 191.

This sequence belongs to the MAP Jupiter family.

It is found in the nucleus. It localises to the cytoplasm. The protein localises to the cytoskeleton. The protein resides in the spindle. Binds to all microtubule populations. The protein is Microtubule-associated protein Jupiter of Drosophila virilis (Fruit fly).